A 348-amino-acid polypeptide reads, in one-letter code: NADH-cytochrome b5 reductase 2 (348 aa).

A helical membrane pass occupies residues 41 to 61; sequence TLLYGAAAAAVAGAGYYFLGG. An FAD-binding FR-type domain is found at 97–202; sequence QGWVSLKLEE…KGPLPKYPWT (106 aa). Residue 205–240 participates in FAD binding; sequence KHGHIALVAGGTGITPMFQLCRAIFNNPDDQTKVTL.

This sequence belongs to the flavoprotein pyridine nucleotide cytochrome reductase family. It depends on FAD as a cofactor.

Its subcellular location is the mitochondrion outer membrane. It catalyses the reaction 2 Fe(III)-[cytochrome b5] + NADH = 2 Fe(II)-[cytochrome b5] + NAD(+) + H(+). In terms of biological role, may mediate the reduction of outer membrane cytochrome b5. This chain is NADH-cytochrome b5 reductase 2 (MCR1), found in Chaetomium globosum (strain ATCC 6205 / CBS 148.51 / DSM 1962 / NBRC 6347 / NRRL 1970) (Soil fungus).